The chain runs to 216 residues: Transmembrane emp24 domain-containing protein eca (216 aa).

The N-terminal stretch at M1–G20 is a signal peptide. Over L21–R183 the chain is Lumenal. Residues R30 to V126 form the GOLD domain. Residues A134–N164 are a coiled coil. The chain crosses the membrane as a helical span at residues V184–M203. The Cytoplasmic segment spans residues R204 to V216. The Prevents secretion from ER signature appears at K213–V216.

Belongs to the EMP24/GP25L family.

It localises to the endoplasmic reticulum membrane. Eca and bai are essential, though not redundant, for dorsoventral patterning of the embryo. Specifically required during early embryogenesis for the activity of maternal tkv, while the zygotic tkv is not affected. Involved in Golgi organization. This Drosophila willistoni (Fruit fly) protein is Transmembrane emp24 domain-containing protein eca.